A 142-amino-acid polypeptide reads, in one-letter code: Large ribosomal subunit protein uL11 (142 aa).

Belongs to the universal ribosomal protein uL11 family. Part of the ribosomal stalk of the 50S ribosomal subunit. Interacts with L10 and the large rRNA to form the base of the stalk. L10 forms an elongated spine to which L12 dimers bind in a sequential fashion forming a multimeric L10(L12)X complex. Post-translationally, one or more lysine residues are methylated.

Forms part of the ribosomal stalk which helps the ribosome interact with GTP-bound translation factors. This Haemophilus ducreyi (strain 35000HP / ATCC 700724) protein is Large ribosomal subunit protein uL11.